The chain runs to 113 residues: Putative hemolysin E-like protein (113 aa).

This sequence belongs to the hemolysin E family.

The protein is Putative hemolysin E-like protein of Shigella flexneri.